The sequence spans 245 residues: Probable transcriptional regulatory protein LVIS_1199 (245 aa).

Residues 1–23 (MSGHSKWHNIQGRKNAQDAKRGK) form a disordered region.

This sequence belongs to the TACO1 family.

The protein localises to the cytoplasm. The chain is Probable transcriptional regulatory protein LVIS_1199 from Levilactobacillus brevis (strain ATCC 367 / BCRC 12310 / CIP 105137 / JCM 1170 / LMG 11437 / NCIMB 947 / NCTC 947) (Lactobacillus brevis).